Consider the following 781-residue polypeptide: DNA translocase FtsK 2 (781 aa).

The next 4 membrane-spanning stretches (helical) occupy residues 24–44 (LLGE…LTIL), 74–94 (FADV…LLLL), 120–140 (AGVT…LEAI), and 170–190 (GFTG…SLFF). The Cytoplasmic segment spans residues 191–781 (HFSWLNLAEQ…NRNGNVVEEE (591 aa)). The FtsK domain maps to 414-623 (GKPVVADLAK…FQVSSKIDSR (210 aa)). 434 to 439 (GSGKSV) contacts ATP.

It belongs to the FtsK/SpoIIIE/SftA family. Homohexamer. Forms a ring that surrounds DNA.

It is found in the cell inner membrane. Its function is as follows. Essential cell division protein that coordinates cell division and chromosome segregation. The N-terminus is involved in assembly of the cell-division machinery. The C-terminus functions as a DNA motor that moves dsDNA in an ATP-dependent manner towards the dif recombination site, which is located within the replication terminus region. Translocation stops specifically at Xer-dif sites, where FtsK interacts with the Xer recombinase, allowing activation of chromosome unlinking by recombination. FtsK orienting polar sequences (KOPS) guide the direction of DNA translocation. FtsK can remove proteins from DNA as it translocates, but translocation stops specifically at XerCD-dif site, thereby preventing removal of XerC and XerD from dif. The protein is DNA translocase FtsK 2 (ftsK2) of Ralstonia nicotianae (strain ATCC BAA-1114 / GMI1000) (Ralstonia solanacearum).